We begin with the raw amino-acid sequence, 545 residues long: Glucans biosynthesis protein G (545 aa).

An N-terminal signal peptide occupies residues 1-34; the sequence is MVSLLRCQSFKPSSSLICSLALSAAFALSSSAFA. The segment at 38–60 is disordered; it reads KPAENKPATPVVSPPKATAQPAN.

This sequence belongs to the OpgD/OpgG family.

The protein localises to the periplasm. The protein operates within glycan metabolism; osmoregulated periplasmic glucan (OPG) biosynthesis. In terms of biological role, involved in the biosynthesis of osmoregulated periplasmic glucans (OPGs). This chain is Glucans biosynthesis protein G, found in Shewanella sp. (strain MR-4).